A 37-amino-acid polypeptide reads, in one-letter code: Cytochrome b6-f complex subunit 5 (37 aa).

The chain crosses the membrane as a helical span at residues 5 to 25 (SLFGIVLGLIPITLAGLFVTA).

This sequence belongs to the PetG family. In terms of assembly, the 4 large subunits of the cytochrome b6-f complex are cytochrome b6, subunit IV (17 kDa polypeptide, PetD), cytochrome f and the Rieske protein, while the 4 small subunits are PetG, PetL, PetM and PetN. The complex functions as a dimer.

It is found in the plastid. The protein localises to the chloroplast thylakoid membrane. Functionally, component of the cytochrome b6-f complex, which mediates electron transfer between photosystem II (PSII) and photosystem I (PSI), cyclic electron flow around PSI, and state transitions. PetG is required for either the stability or assembly of the cytochrome b6-f complex. The protein is Cytochrome b6-f complex subunit 5 of Arabis hirsuta (Hairy rock-cress).